Here is a 269-residue protein sequence, read N- to C-terminus: Aminoglycoside (3'') (9) adenylyltransferase (269 aa).

The enzyme catalyses streptomycin + ATP = 3''-O-adenylylstreptomycin + diphosphate. It catalyses the reaction spectinomycin + ATP = 9-O-adenylylspectinomycin + diphosphate. In terms of biological role, mediates bacterial resistance to the antibiotic spectinomycin and probably also to streptomycin. In Rhizobium radiobacter (Agrobacterium tumefaciens), this protein is Aminoglycoside (3'') (9) adenylyltransferase.